Reading from the N-terminus, the 296-residue chain is Myeloid differentiation primary response protein MyD88 (296 aa).

A Death domain is found at 32-109 (RLSLFLNPRT…DILYELKDRI (78 aa)). The interval 110 to 155 (EEDCQKYIRNQQKQESEKPLQVARVESSVPQTKELGGITTLDDPLG) is intermediate domain. The TIR domain occupies 159-293 (ELFDAFICYC…WFWTRLAKAL (135 aa)). Serine 244 is subject to Phosphoserine.

As to quaternary structure, homodimer. Also forms heterodimers with TIRAP. Binds to TLR2, TLR4, IRAK1, IRAK2 and IRAK4 via their respective TIR domains. Interacts with IL18R1. Interacts with BMX, IL1RL1, IKBKE and IRF7. Interacts with LRRFIP1 and LRRFIP2; this interaction positively regulates Toll-like receptor (TLR) signaling in response to agonist. Interacts with FLII. LRRFIP1 and LRRFIP2 compete with FLII for MYD88-binding. Interacts with IRF1. Upon IL1B treatment, forms a complex with PELI1, IRAK1, IRAK4 and TRAF6; this complex recruits MAP3K7/TAK1, TAB1 and TAB2 to mediate NF-kappa-B activation. Direct binding of SMAD6 to PELI1 prevents the complex formation and hence negatively regulates IL1R-TLR signaling and eventually NF-kappa-B-mediated gene expression. May interact with PIK3AP1. Interacts (via TIR domain) with DHX9 (via H2A and OB-fold regions); this interaction is direct. Interacts with OTUD4 deubiquitinase; the interaction is direct. Post-translationally, ubiquitinated; undergoes 'Lys-63'-linked polyubiquitination. OTUD4 specifically hydrolyzes 'Lys-63'-linked polyubiquitinated MYD88. Deubiquitinated by USP3 that cleaves 'Lys-63'-linked ubiquitin chains leading to inhibition of MYD88-induced NF-kappa-B signaling.

The protein resides in the cytoplasm. It localises to the nucleus. Its function is as follows. Adapter protein involved in the Toll-like receptor and IL-1 receptor signaling pathway in the innate immune response. Acts via IRAK1, IRAK2, IRF7 and TRAF6, leading to NF-kappa-B activation, cytokine secretion and the inflammatory response. Increases IL-8 transcription. Involved in IL-18-mediated signaling pathway. Activates IRF1 resulting in its rapid migration into the nucleus to mediate an efficient induction of IFN-beta, NOS2/INOS, and IL12A genes. Upon TLR8 activation by GU-rich single-stranded RNA (GU-rich RNA) derived from viruses, induces IL1B release through NLRP3 inflammasome activation. MyD88-mediated signaling in intestinal epithelial cells is crucial for maintenance of gut homeostasis and controls the expression of the antimicrobial lectin REG3G in the small intestine. In Rattus norvegicus (Rat), this protein is Myeloid differentiation primary response protein MyD88 (Myd88).